The following is a 217-amino-acid chain: 3,4-dihydroxy-2-butanone 4-phosphate synthase (217 aa).

D-ribulose 5-phosphate is bound by residues 37 to 38, D42, 150 to 154, and E174; these read RE and RRGHT. A Mg(2+)-binding site is contributed by E38. Residue H153 coordinates Mg(2+).

Belongs to the DHBP synthase family. In terms of assembly, homodimer. Requires Mg(2+) as cofactor. The cofactor is Mn(2+).

The catalysed reaction is D-ribulose 5-phosphate = (2S)-2-hydroxy-3-oxobutyl phosphate + formate + H(+). Its pathway is cofactor biosynthesis; riboflavin biosynthesis; 2-hydroxy-3-oxobutyl phosphate from D-ribulose 5-phosphate: step 1/1. Functionally, catalyzes the conversion of D-ribulose 5-phosphate to formate and 3,4-dihydroxy-2-butanone 4-phosphate. In Serratia proteamaculans (strain 568), this protein is 3,4-dihydroxy-2-butanone 4-phosphate synthase.